The primary structure comprises 468 residues: Acetyl-CoA decarbonylase/synthase complex subunit gamma (468 aa).

Residues Met1–Asp60 enclose the 4Fe-4S domain. Cys18, Cys21, Cys26, and Cys43 together coordinate [4Fe-4S] cluster.

In terms of assembly, heterodimer of delta and gamma chains. The ACDS complex is made up of alpha, epsilon, beta, gamma and delta chains with a probable stoichiometry of (alpha(2)epsilon(2))(4)-beta(8)-(gamma(1)delta(1))(8). Corrinoid is required as a cofactor. Requires [4Fe-4S] cluster as cofactor.

The enzyme catalyses 5,6,7,8-tetrahydrosarcinapterin + methyl-Co(III)-[corrinoid Fe-S protein] = 5-methyltetrahydrosarcinapterin + Co(I)-[corrinoid Fe-S protein] + H(+). It participates in one-carbon metabolism; methanogenesis from acetate. Part of a complex that catalyzes the reversible cleavage of acetyl-CoA, allowing growth on acetate as sole source of carbon and energy. The polypeptide is Acetyl-CoA decarbonylase/synthase complex subunit gamma (Methanosarcina acetivorans (strain ATCC 35395 / DSM 2834 / JCM 12185 / C2A)).